Here is a 247-residue protein sequence, read N- to C-terminus: Uridylate kinase (247 aa).

ATP is bound at residue 16–19 (KLSG). Gly-58 lines the UMP pocket. ATP contacts are provided by Gly-59 and Arg-63. UMP contacts are provided by residues Asp-78 and 139–146 (TGNPFFTT). Residues Thr-166, Tyr-172, and Asp-175 each contribute to the ATP site.

Belongs to the UMP kinase family. In terms of assembly, homohexamer.

The protein localises to the cytoplasm. It catalyses the reaction UMP + ATP = UDP + ADP. Its pathway is pyrimidine metabolism; CTP biosynthesis via de novo pathway; UDP from UMP (UMPK route): step 1/1. With respect to regulation, inhibited by UTP. Functionally, catalyzes the reversible phosphorylation of UMP to UDP. The sequence is that of Uridylate kinase from Xylella fastidiosa (strain Temecula1 / ATCC 700964).